The primary structure comprises 78 residues: Large ribosomal subunit protein bL28 (78 aa).

Residues 1 to 28 form a disordered region; sequence MSAYCQVTGRKPGFGKQVSHSHRHTSRR.

It belongs to the bacterial ribosomal protein bL28 family.

The sequence is that of Large ribosomal subunit protein bL28 from Corynebacterium urealyticum (strain ATCC 43042 / DSM 7109).